We begin with the raw amino-acid sequence, 399 residues long: Enolase (399 aa).

Residue Q152 participates in (2R)-2-phosphoglycerate binding. E194 serves as the catalytic Proton donor. Mg(2+)-binding residues include D230, E273, and D301. (2R)-2-phosphoglycerate contacts are provided by K326, R355, S356, and K377. The active-site Proton acceptor is K326.

Belongs to the enolase family. Mg(2+) is required as a cofactor.

The protein resides in the cytoplasm. It is found in the secreted. The protein localises to the cell surface. The enzyme catalyses (2R)-2-phosphoglycerate = phosphoenolpyruvate + H2O. The protein operates within carbohydrate degradation; glycolysis; pyruvate from D-glyceraldehyde 3-phosphate: step 4/5. Functionally, catalyzes the reversible conversion of 2-phosphoglycerate (2-PG) into phosphoenolpyruvate (PEP). It is essential for the degradation of carbohydrates via glycolysis. This is Enolase from Methanocorpusculum labreanum (strain ATCC 43576 / DSM 4855 / Z).